The sequence spans 221 residues: Deoxyribose-phosphate aldolase (221 aa).

Asp-89 functions as the Proton donor/acceptor in the catalytic mechanism. Residue Lys-151 is the Schiff-base intermediate with acetaldehyde of the active site. The active-site Proton donor/acceptor is the Lys-180.

It belongs to the DeoC/FbaB aldolase family. DeoC type 1 subfamily.

It is found in the cytoplasm. The catalysed reaction is 2-deoxy-D-ribose 5-phosphate = D-glyceraldehyde 3-phosphate + acetaldehyde. It functions in the pathway carbohydrate degradation; 2-deoxy-D-ribose 1-phosphate degradation; D-glyceraldehyde 3-phosphate and acetaldehyde from 2-deoxy-alpha-D-ribose 1-phosphate: step 2/2. Catalyzes a reversible aldol reaction between acetaldehyde and D-glyceraldehyde 3-phosphate to generate 2-deoxy-D-ribose 5-phosphate. This chain is Deoxyribose-phosphate aldolase, found in Mesomycoplasma hyopneumoniae (strain 232) (Mycoplasma hyopneumoniae).